The sequence spans 186 residues: ATP synthase subunit delta (186 aa).

The protein belongs to the ATPase delta chain family. In terms of assembly, F-type ATPases have 2 components, F(1) - the catalytic core - and F(0) - the membrane proton channel. F(1) has five subunits: alpha(3), beta(3), gamma(1), delta(1), epsilon(1). F(0) has three main subunits: a(1), b(2) and c(10-14). The alpha and beta chains form an alternating ring which encloses part of the gamma chain. F(1) is attached to F(0) by a central stalk formed by the gamma and epsilon chains, while a peripheral stalk is formed by the delta and b chains.

The protein resides in the cell inner membrane. In terms of biological role, f(1)F(0) ATP synthase produces ATP from ADP in the presence of a proton or sodium gradient. F-type ATPases consist of two structural domains, F(1) containing the extramembraneous catalytic core and F(0) containing the membrane proton channel, linked together by a central stalk and a peripheral stalk. During catalysis, ATP synthesis in the catalytic domain of F(1) is coupled via a rotary mechanism of the central stalk subunits to proton translocation. This protein is part of the stalk that links CF(0) to CF(1). It either transmits conformational changes from CF(0) to CF(1) or is implicated in proton conduction. This chain is ATP synthase subunit delta, found in Brucella anthropi (strain ATCC 49188 / DSM 6882 / CCUG 24695 / JCM 21032 / LMG 3331 / NBRC 15819 / NCTC 12168 / Alc 37) (Ochrobactrum anthropi).